A 500-amino-acid chain; its full sequence is MLNINFVNEESSTNQGLVVFIDEQLKLDSNLIGLDQQHHGLISKTIQNKLQFTGKYGQIKVIPSVIKSGEVRYLIIAGLGNEEKLTEAKIEELGGKILQHATGCKISTIGLKLTNRISRFTSQTFASLVASGAFLASYRFDKYRTTLKEAEKFAVESIEIFTDNSTETAKLFEIKKLIAEAVFFTRDISNEPSNIKTPQVYAERIVDILEPLGVDVDVIGEREMKNLGMGALLGVGQGSQNESKLVVMEYKGGSKDASTIALVGKGVIFDTGGISLKPSSNMHLMRYDMGGSAAVVGTIIAVAGQKLPINIVGVVGLVENMPSGNAQRPGDVVTTMSGQTAEVLNTDAEGRLVLADAVWYAQEKFKPKCVIDVATLTGAITVALGNTYAGCFSNNDELADKLIKVGEEVNEKLWRMPLHDEYDAMINSDIADMANIGNVPGAAGSCIAAHFIKRFIKDGVDWAHLDIAGVANSNKASALGPKGAVGYGVRLLEKFIKEYT.

Lys-265 and Asp-270 together coordinate Mn(2+). Residue Lys-277 is part of the active site. The Mn(2+) site is built by Asp-288, Asp-347, and Glu-349. Arg-351 is an active-site residue.

Belongs to the peptidase M17 family. The cofactor is Mn(2+).

It localises to the cytoplasm. The catalysed reaction is Release of an N-terminal amino acid, Xaa-|-Yaa-, in which Xaa is preferably Leu, but may be other amino acids including Pro although not Arg or Lys, and Yaa may be Pro. Amino acid amides and methyl esters are also readily hydrolyzed, but rates on arylamides are exceedingly low.. It carries out the reaction Release of an N-terminal amino acid, preferentially leucine, but not glutamic or aspartic acids.. Functionally, presumably involved in the processing and regular turnover of intracellular proteins. Catalyzes the removal of unsubstituted N-terminal amino acids from various peptides. The chain is Probable cytosol aminopeptidase from Rickettsia massiliae (strain Mtu5).